The primary structure comprises 290 residues: 2-dehydro-3-deoxyphosphooctonate aldolase 1 (290 aa).

Ala-2 bears the N-acetylalanine mark.

This sequence belongs to the KdsA family. Expressed in shoots.

It localises to the cytoplasm. The catalysed reaction is D-arabinose 5-phosphate + phosphoenolpyruvate + H2O = 3-deoxy-alpha-D-manno-2-octulosonate-8-phosphate + phosphate. In terms of biological role, catalyzes the stereospecific condensation of D-arabinose 5-phosphate and phosphoenolpyruvate to form 3-deoxy-D-manno-octulosonate 8-phosphate (KDO-8-phosphate) and inorganic phosphate. Involved in the biosynthesis of 3-deoxy-D-manno-octulosonate (KDO) which is an indispensable component of rhamnogalacturonan II (RG-II), a structurally complex pectic polysaccharide of the primary cell wall. RG-II is essential for the cell wall integrity of rapidly growing tissues and pollen tube growth and elongation. The polypeptide is 2-dehydro-3-deoxyphosphooctonate aldolase 1 (KDSA1) (Arabidopsis thaliana (Mouse-ear cress)).